We begin with the raw amino-acid sequence, 232 residues long: tRNA1(Val) (adenine(37)-N6)-methyltransferase (232 aa).

The protein belongs to the methyltransferase superfamily. tRNA (adenine-N(6)-)-methyltransferase family.

The protein resides in the cytoplasm. It carries out the reaction adenosine(37) in tRNA1(Val) + S-adenosyl-L-methionine = N(6)-methyladenosine(37) in tRNA1(Val) + S-adenosyl-L-homocysteine + H(+). In terms of biological role, specifically methylates the adenine in position 37 of tRNA(1)(Val) (anticodon cmo5UAC). The sequence is that of tRNA1(Val) (adenine(37)-N6)-methyltransferase from Haemophilus influenzae (strain PittGG).